Consider the following 37-residue polypeptide: Cytochrome bd-I ubiquinol oxidase subunit X (37 aa).

The helical transmembrane segment at 4–24 threads the bilayer; sequence FAWILGTLLACSFGVITALAL.

Belongs to the cytochrome ubiquinol oxidase subunit X family. As to quaternary structure, may be a subunit of cytochrome bd-I ubiquinol oxidase. Probably interacts with CydA and CydB.

The protein localises to the cell inner membrane. It catalyses the reaction 2 a ubiquinol + O2(in) + 4 H(+)(in) = 2 a ubiquinone + 2 H2O(in) + 4 H(+)(out). It functions in the pathway energy metabolism; oxidative phosphorylation. Required for correct functioning of cytochrome bd-I oxidase. This protein and AppX may have some functional overlap. This chain is Cytochrome bd-I ubiquinol oxidase subunit X (cydX), found in Escherichia coli (strain K12).